A 330-amino-acid polypeptide reads, in one-letter code: Methylthioribose-1-phosphate isomerase (330 aa).

Substrate is bound by residues 49-51 (RGA), Arg-83, and Gln-179. Asp-220 acts as the Proton donor in catalysis. Position 230–231 (230–231 (NK)) interacts with substrate.

Belongs to the eIF-2B alpha/beta/delta subunits family. MtnA subfamily.

The catalysed reaction is 5-(methylsulfanyl)-alpha-D-ribose 1-phosphate = 5-(methylsulfanyl)-D-ribulose 1-phosphate. It participates in amino-acid biosynthesis; L-methionine biosynthesis via salvage pathway; L-methionine from S-methyl-5-thio-alpha-D-ribose 1-phosphate: step 1/6. Catalyzes the interconversion of methylthioribose-1-phosphate (MTR-1-P) into methylthioribulose-1-phosphate (MTRu-1-P). This chain is Methylthioribose-1-phosphate isomerase, found in Thermus thermophilus (strain ATCC BAA-163 / DSM 7039 / HB27).